A 226-amino-acid polypeptide reads, in one-letter code: Leucyl/phenylalanyl-tRNA--protein transferase (226 aa).

Belongs to the L/F-transferase family.

The protein localises to the cytoplasm. It catalyses the reaction N-terminal L-lysyl-[protein] + L-leucyl-tRNA(Leu) = N-terminal L-leucyl-L-lysyl-[protein] + tRNA(Leu) + H(+). The enzyme catalyses N-terminal L-arginyl-[protein] + L-leucyl-tRNA(Leu) = N-terminal L-leucyl-L-arginyl-[protein] + tRNA(Leu) + H(+). It carries out the reaction L-phenylalanyl-tRNA(Phe) + an N-terminal L-alpha-aminoacyl-[protein] = an N-terminal L-phenylalanyl-L-alpha-aminoacyl-[protein] + tRNA(Phe). Its function is as follows. Functions in the N-end rule pathway of protein degradation where it conjugates Leu, Phe and, less efficiently, Met from aminoacyl-tRNAs to the N-termini of proteins containing an N-terminal arginine or lysine. This chain is Leucyl/phenylalanyl-tRNA--protein transferase, found in Pseudomonas fluorescens (strain Pf0-1).